The chain runs to 107 residues: uncharacterized protein (107 aa).

This is an uncharacterized protein from Homo sapiens (Human).